Consider the following 521-residue polypeptide: Cytochrome P450 1A1 (521 aa).

Residue Phe229 coordinates substrate. Position 463 (Cys463) interacts with heme.

Belongs to the cytochrome P450 family. Heme is required as a cofactor.

Its subcellular location is the endoplasmic reticulum membrane. The protein localises to the microsome membrane. It carries out the reaction an organic molecule + reduced [NADPH--hemoprotein reductase] + O2 = an alcohol + oxidized [NADPH--hemoprotein reductase] + H2O + H(+). Functionally, cytochromes P450 are a group of heme-thiolate monooxygenases. They oxidize a variety of structurally unrelated compounds, including steroids, fatty acids, and xenobiotics. The chain is Cytochrome P450 1A1 (cyp1a1) from Limanda limanda (Common dab).